Consider the following 595-residue polypeptide: Alpha-1,3-galactosidase B (595 aa).

An N-terminal signal peptide occupies residues 1 to 22 (MKTILLFALSLLLSLSVSDVCA). PbH1 repeat units follow at residues 432–454 (TPEVLFAGNTIRNNRARGTLFST), 455–477 (PKKTVVEDNLFDHTSGTAILLCG), and 488–541 (CRDV…VIED).

It belongs to the glycosyl hydrolase 110 family. B subfamily.

It catalyses the reaction Hydrolysis of terminal, non-reducing branched (1-&gt;3)-alpha-D-galactosidic residues, producing free D-galactose.. The enzyme catalyses Hydrolysis of terminal, non-reducing linear (1-&gt;3)-alpha-D-galactosidic residues, producing free D-galactose.. It carries out the reaction Hydrolysis of terminal, non-reducing alpha-D-galactose residues in alpha-D-galactosides, including galactose oligosaccharides, galactomannans and galactolipids.. In terms of biological role, alpha-galactosidase. Removes both branched alpha-1,3-linked galactose residues of blood group B antigens and linear alpha-1,3-linked galactose structures. The sequence is that of Alpha-1,3-galactosidase B (glaB) from Bacteroides fragilis (strain YCH46).